Consider the following 341-residue polypeptide: L-threonine 3-dehydrogenase (341 aa).

Cys38 is a Zn(2+) binding site. Residues Thr40 and His43 each act as charge relay system in the active site. Positions 63, 64, 93, 96, 99, and 107 each coordinate Zn(2+). Residues Ile175, Asp195, Arg200, 262 to 264 (LGI), and 286 to 287 (IY) each bind NAD(+).

It belongs to the zinc-containing alcohol dehydrogenase family. Homotetramer. Zn(2+) serves as cofactor.

It localises to the cytoplasm. The enzyme catalyses L-threonine + NAD(+) = (2S)-2-amino-3-oxobutanoate + NADH + H(+). The protein operates within amino-acid degradation; L-threonine degradation via oxydo-reductase pathway; glycine from L-threonine: step 1/2. Catalyzes the NAD(+)-dependent oxidation of L-threonine to 2-amino-3-ketobutyrate. This Escherichia coli (strain K12 / MC4100 / BW2952) protein is L-threonine 3-dehydrogenase.